Here is a 295-residue protein sequence, read N- to C-terminus: Mitochondrial dicarboxylate transporter (295 aa).

3 Solcar repeats span residues 4-88 (KQVK…LKEH), 96-188 (TNMW…FKNF), and 198-286 (KKNS…LKKY). A run of 6 helical transmembrane segments spans residues 8–24 (YPWW…VMNT), 63–82 (GLSA…FGMY), 98–122 (MWYL…ADLI), 163–182 (GWKP…VVTY), 204–224 (LTSS…ADVI), and 262–280 (WVPS…FFAM).

The protein belongs to the mitochondrial carrier (TC 2.A.29) family. As to quaternary structure, homodimer.

It localises to the mitochondrion inner membrane. In terms of biological role, mitochondrial dicarboxylic transporter catalyzing the exchange of dicarboxylic acids like malate and succinate for inorganic phosphate. Required for growth on ethanol and acetate. The polypeptide is Mitochondrial dicarboxylate transporter (DIC1) (Candida glabrata (strain ATCC 2001 / BCRC 20586 / JCM 3761 / NBRC 0622 / NRRL Y-65 / CBS 138) (Yeast)).